Consider the following 224-residue polypeptide: Deoxyribose-phosphate aldolase (224 aa).

Asp-92 serves as the catalytic Proton donor/acceptor. The active-site Schiff-base intermediate with acetaldehyde is Lys-154. The Proton donor/acceptor role is filled by Lys-183.

Belongs to the DeoC/FbaB aldolase family. DeoC type 1 subfamily.

It localises to the cytoplasm. The catalysed reaction is 2-deoxy-D-ribose 5-phosphate = D-glyceraldehyde 3-phosphate + acetaldehyde. Its pathway is carbohydrate degradation; 2-deoxy-D-ribose 1-phosphate degradation; D-glyceraldehyde 3-phosphate and acetaldehyde from 2-deoxy-alpha-D-ribose 1-phosphate: step 2/2. In terms of biological role, catalyzes a reversible aldol reaction between acetaldehyde and D-glyceraldehyde 3-phosphate to generate 2-deoxy-D-ribose 5-phosphate. The protein is Deoxyribose-phosphate aldolase of Actinobacillus succinogenes (strain ATCC 55618 / DSM 22257 / CCUG 43843 / 130Z).